A 291-amino-acid chain; its full sequence is Shikimate dehydrogenase (NADP(+)) (291 aa).

Residues 23–25 and Thr70 contribute to the shikimate site; that span reads SFS. Catalysis depends on Lys74, which acts as the Proton acceptor. Shikimate is bound by residues Asn95 and Asp110. NADP(+)-binding positions include 135-139 and Leu232; that span reads GAGGA. Position 234 (Tyr234) interacts with shikimate. Residue Gly255 participates in NADP(+) binding.

The protein belongs to the shikimate dehydrogenase family. As to quaternary structure, homodimer.

The enzyme catalyses shikimate + NADP(+) = 3-dehydroshikimate + NADPH + H(+). It functions in the pathway metabolic intermediate biosynthesis; chorismate biosynthesis; chorismate from D-erythrose 4-phosphate and phosphoenolpyruvate: step 4/7. In terms of biological role, involved in the biosynthesis of the chorismate, which leads to the biosynthesis of aromatic amino acids. Catalyzes the reversible NADPH linked reduction of 3-dehydroshikimate (DHSA) to yield shikimate (SA). The sequence is that of Shikimate dehydrogenase (NADP(+)) from Desulforamulus reducens (strain ATCC BAA-1160 / DSM 100696 / MI-1) (Desulfotomaculum reducens).